We begin with the raw amino-acid sequence, 211 residues long: Dephospho-CoA kinase (211 aa).

Residues 3-206 form the DPCK domain; the sequence is VLGLTGGIGS…PGMKGPDPHA (204 aa). An ATP-binding site is contributed by 11–16; that stretch reads GSGKSI.

This sequence belongs to the CoaE family.

The protein resides in the cytoplasm. The catalysed reaction is 3'-dephospho-CoA + ATP = ADP + CoA + H(+). It functions in the pathway cofactor biosynthesis; coenzyme A biosynthesis; CoA from (R)-pantothenate: step 5/5. Functionally, catalyzes the phosphorylation of the 3'-hydroxyl group of dephosphocoenzyme A to form coenzyme A. The sequence is that of Dephospho-CoA kinase from Syntrophotalea carbinolica (strain DSM 2380 / NBRC 103641 / GraBd1) (Pelobacter carbinolicus).